A 119-amino-acid chain; its full sequence is MPRVKGGTVTRKRRKKILKLAKGYRGAKHLLFKSANTQVMVSYRYAFRDRRQRKRDFRKLWIARINAAARMNDMSYSQLMHGLRVAEIDMNRKMLADLAVNDAAAFTSVVEAAKAALNK.

It belongs to the bacterial ribosomal protein bL20 family.

Functionally, binds directly to 23S ribosomal RNA and is necessary for the in vitro assembly process of the 50S ribosomal subunit. It is not involved in the protein synthesizing functions of that subunit. The sequence is that of Large ribosomal subunit protein bL20 from Latilactobacillus sakei subsp. sakei (strain 23K) (Lactobacillus sakei subsp. sakei).